Consider the following 90-residue polypeptide: Small ribosomal subunit protein uS15c (90 aa).

Belongs to the universal ribosomal protein uS15 family. In terms of assembly, part of the 30S ribosomal subunit.

The protein localises to the plastid. It is found in the chloroplast. This is Small ribosomal subunit protein uS15c (rps15) from Daucus carota (Wild carrot).